A 107-amino-acid polypeptide reads, in one-letter code: Putidaredoxin (107 aa).

The 105-residue stretch at 2–106 (SKVVYVSHDG…GIVVDVPDRQ (105 aa)) folds into the 2Fe-2S ferredoxin-type domain. Residues Cys-40, Cys-46, Cys-49, and Cys-87 each coordinate [2Fe-2S] cluster.

This sequence belongs to the adrenodoxin/putidaredoxin family. Monomer. The cofactor is [2Fe-2S] cluster.

Its function is as follows. The oxidation of camphor by cytochrome P450-CAM requires the participation of a flavoprotein, putidaredoxin reductase, and an iron-sulfur protein, putidaredoxin, to mediate the transfer of electrons from NADH to P450 for oxygen activation. The sequence is that of Putidaredoxin (camB) from Pseudomonas putida (Arthrobacter siderocapsulatus).